A 397-amino-acid polypeptide reads, in one-letter code: uncharacterized protein (397 aa).

12 consecutive transmembrane segments (helical) span residues 5 to 25 (LKILVIGMFINVTGASFLWPL), 43 to 63 (LVLMLNSGASVAGNLCGGFLF), 69 to 89 (FKSIMLGIAITLASLMGLVFF), 92 to 112 (WPAYIVLLTIVGFGSGVVFPA), 131 to 151 (AIYVAQNAGVAVGSALGGVVA), 157 to 177 (YVFLANAVLYLIFFFIVYFGF), 202 to 222 (FAALIILSGGYVLGWLAYSQW), 233 to 253 (IGISLSLYSVLWTVNGILIVL), 269 to 289 (LKAQMVIGFIIFIVSFSMLLT), 293 to 313 (FPMFLAAMVILTIGEMLVWPA), 333 to 353 (FVNSAATGGRMIGPLFGGVLV), and 360 to 380 (ALVLSLLVLLLISIATTLLYD).

It belongs to the major facilitator superfamily.

It is found in the cell membrane. This is an uncharacterized protein from Bacillus subtilis (strain 168).